The sequence spans 376 residues: F-box/kelch-repeat protein At1g67480 (376 aa).

Positions 37–85 (DPLIPGLPDDVAKQCLALVPRARFPSMGSVCKKWRFVVQSKEFITVRRL) constitute an F-box domain. 4 Kelch repeats span residues 139–189 (KLLV…EVNG), 190–237 (HVYV…AFNG), 239–289 (LYVM…LFCI), and 291–335 (WKNH…LLFS).

The protein is F-box/kelch-repeat protein At1g67480 of Arabidopsis thaliana (Mouse-ear cress).